Reading from the N-terminus, the 669-residue chain is PAN2-PAN3 deadenylation complex subunit PAN3 (669 aa).

A compositionally biased stretch (polar residues) spans 1-10 (MATTFGSPSG). The disordered stretch occupies residues 1 to 25 (MATTFGSPSGDSRRGVASPRPKGRE). The segment at 25–54 (EAKNTFCRNVTIYGHCRYENSKCRPPHLPD) adopts a C3H1-type zinc-finger fold. The interval 247-519 (QVMPNSTLPV…DIDNFLGGIS (273 aa)) is pseudokinase domain. Residues R298, 347-354 (DYHPNSKS), and 408-409 (SK) contribute to the ATP site. A coiled-coil region spans residues 520-558 (DQLASVFDSELHAQDTLTNTLGRELESSRIVRLLVKLNM). The knob domain stretch occupies residues 559–669 (VNERPELDAS…LIRAGRGQGK (111 aa)).

Belongs to the protein kinase superfamily. PAN3 family. In terms of assembly, homodimer. Forms a heterotrimer with a catalytic subunit PAN2 to form the poly(A)-nuclease (PAN) deadenylation complex. Interacts (via PAM-2 motif) with poly(A)-binding protein PAB1 (via PABC domain), conferring substrate specificity of the enzyme complex.

It localises to the cytoplasm. Regulatory subunit of the poly(A)-nuclease (PAN) deadenylation complex, one of two cytoplasmic mRNA deadenylases involved in mRNA turnover. PAN specifically shortens poly(A) tails of RNA and the activity is stimulated by poly(A)-binding protein PAB1. PAN deadenylation is followed by rapid degradation of the shortened mRNA tails by the CCR4-NOT complex. Deadenylated mRNAs are then degraded by two alternative mechanisms, namely exosome-mediated 3'-5' exonucleolytic degradation, or deadenylation-dependent mRNA decaping and subsequent 5'-3' exonucleolytic degradation by XRN1. May also be involved in post-transcriptional maturation of mRNA poly(A) tails. PAN3 acts as a positive regulator for PAN activity, recruiting the catalytic subunit PAN2 to mRNA via its interaction with RNA and with PAB1. The sequence is that of PAN2-PAN3 deadenylation complex subunit PAN3 from Phaeosphaeria nodorum (strain SN15 / ATCC MYA-4574 / FGSC 10173) (Glume blotch fungus).